A 367-amino-acid polypeptide reads, in one-letter code: Quinolinate synthase (367 aa).

Iminosuccinate contacts are provided by His-45 and Ser-62. Residue Cys-109 participates in [4Fe-4S] cluster binding. Iminosuccinate-binding positions include 140 to 142 (YVN) and Ser-161. A [4Fe-4S] cluster-binding site is contributed by Cys-229. Iminosuccinate contacts are provided by residues 255–257 (HPE) and Thr-272. Cys-319 is a binding site for [4Fe-4S] cluster.

This sequence belongs to the quinolinate synthase family. Type 3 subfamily. The cofactor is [4Fe-4S] cluster.

The protein localises to the cytoplasm. It carries out the reaction iminosuccinate + dihydroxyacetone phosphate = quinolinate + phosphate + 2 H2O + H(+). It participates in cofactor biosynthesis; NAD(+) biosynthesis; quinolinate from iminoaspartate: step 1/1. Functionally, catalyzes the condensation of iminoaspartate with dihydroxyacetone phosphate to form quinolinate. This chain is Quinolinate synthase, found in Anoxybacillus flavithermus (strain DSM 21510 / WK1).